The chain runs to 961 residues: Probable exosome complex exonuclease RRP44 (961 aa).

The PINc domain maps to 73 to 188 (HALIVDSTSL…LVFDEDSKKR (116 aa)). The CSD1 domain occupies 232 to 338 (IFDEYLSHDR…DEENDDENDE (107 aa)). The disordered stretch occupies residues 322-346 (ADDMGNEDEENDDENDEPKAKKSKK). Residues 325–337 (MGNEDEENDDEND) show a composition bias toward acidic residues. The CSD2 domain occupies 381–447 (LFCPAERLIP…ENEVLLLEHD (67 aa)). An RNB domain is found at 479–809 (RVDLRDLTIC…IVHRLLAAAI (331 aa)).

Belongs to the RNR ribonuclease family. As to quaternary structure, component of the RNA exosome complex. In terms of tissue distribution, ubiquitously expressed.

The protein resides in the nucleus. Its subcellular location is the nucleoplasm. Putative catalytic component of the RNA exosome complex which has 3'-&gt;5' exoribonuclease activity and participates in a multitude of cellular RNA processing and degradation events. Has both 3'-5' exonuclease and endonuclease activities. Involved in regulation of antisense ribosomal siRNA production. This Caenorhabditis elegans protein is Probable exosome complex exonuclease RRP44 (dis-3).